A 237-amino-acid polypeptide reads, in one-letter code: Ribosomal RNA small subunit methyltransferase G (237 aa).

S-adenosyl-L-methionine-binding positions include Gly-76, Phe-81, 128 to 129 (VE), and Arg-147.

It belongs to the methyltransferase superfamily. RNA methyltransferase RsmG family.

Its subcellular location is the cytoplasm. In terms of biological role, specifically methylates the N7 position of a guanine in 16S rRNA. The polypeptide is Ribosomal RNA small subunit methyltransferase G (Prochlorococcus marinus (strain MIT 9215)).